We begin with the raw amino-acid sequence, 1588 residues long: Centrosomal protein of 170 kDa (1588 aa).

Residues 23–73 (IFVGRDDCELMLQSRSVDKQHAVINYDASMDEHLVKDLGSLNGTFVNDVRI) enclose the FHA domain. Disordered regions lie at residues 121-172 (LSQK…MPRG), 299-323 (KFTS…GIQT), 338-447 (QNNP…EEPS), and 461-508 (SGSL…NPNS). Ser-141 is modified (phosphoserine). A compositionally biased stretch (basic and acidic residues) spans 155-164 (EALKSEEKPM). Residues 347-357 (ERTEEDSKSIK) show a composition bias toward basic and acidic residues. Ser-355 and Ser-358 each carry phosphoserine. Tyr-363 is modified (phosphotyrosine). Residues 407–418 (KKKAQSTEKHQE) are compositionally biased toward basic and acidic residues. A phosphoserine mark is found at Ser-443, Ser-463, and Ser-494. Residue Thr-498 is modified to Phosphothreonine. A phosphoserine mark is found at Ser-568, Ser-577, Ser-628, and Ser-631. The tract at residues 602-854 (ELSATVENET…PHINKQNSSV (253 aa)) is disordered. Residues 620–631 (LRSTSCTTSLAS) are compositionally biased toward polar residues. Thr-639 is modified (phosphothreonine). The span at 645–654 (NEEKLLESSR) shows a compositional bias: basic and acidic residues. A Phosphoserine modification is found at Ser-662. Positions 663 to 691 (EIGEKQDTELQEKEAQVYQSEKHDADRGL) are enriched in basic and acidic residues. Residue Ser-718 is modified to Phosphoserine. The segment covering 720-731 (SKEKSETEKETS) has biased composition (basic and acidic residues). Residue Thr-752 is modified to Phosphothreonine. Composition is skewed to basic and acidic residues over residues 764–774 (HIDKCREESSK) and 789–821 (SKGD…KESS). Polar residues predominate over residues 822-839 (KSLVRQGSFTIDKPSSNI). A phosphoserine mark is found at Ser-829, Ser-870, and Ser-872. The targeting to microtubules stretch occupies residues 844–1588 (IPHINKQNSS…GEEEDVTVHE (745 aa)). A compositionally biased stretch (basic and acidic residues) spans 899–908 (LREDNNKTDE). Disordered regions lie at residues 899-1222 (LRED…RWRR) and 1228-1247 (ASTS…HTRL). A phosphothreonine mark is found at Thr-906 and Thr-912. Residues 913-937 (PSYNRDNSISPESDVDTASTISLVT) show a composition bias toward polar residues. Phosphoserine is present on residues Ser-922, Ser-925, and Ser-950. Basic and acidic residues predominate over residues 967-980 (DVTKSGSREKIEKK). Ser-1008 is modified (phosphoserine). At Thr-1012 the chain carries Phosphothreonine. The span at 1028–1038 (IMSSDQETYSC) shows a compositional bias: polar residues. Phosphothreonine is present on Thr-1047. Ser-1048 bears the Phosphoserine mark. The segment covering 1049–1062 (ADEHNIHSKLEGGK) has biased composition (basic and acidic residues). The span at 1075 to 1093 (STSKSTTLPRPRPTRTSLL) shows a compositional bias: low complexity. Ser-1102, Ser-1104, Ser-1122, Ser-1123, Ser-1135, Ser-1150, and Ser-1155 each carry phosphoserine. The tract at residues 1103–1588 (DSELADADKA…GEEEDVTVHE (486 aa)) is targeting to centrosomes. Low complexity predominate over residues 1112 to 1128 (ASVASEVSTTSSTSKPP). Over residues 1158–1173 (EATISRSSASARTAEA) the composition is skewed to low complexity. Phosphoserine occurs at positions 1188, 1195, 1200, 1229, 1231, 1241, 1260, and 1270. The span at 1191 to 1218 (TRANSISRLSDSKVKSMSSTHGSPSVNS) shows a compositional bias: polar residues. Positions 1315 to 1334 (SVTSSGTAPSTTVSTAATTP) are disordered. A Phosphoserine modification is found at Ser-1362. The disordered stretch occupies residues 1370–1398 (PLVHSKTPEGNNGRSVDSRPQPAEHPDHL). Positions 1467–1495 (KTSSMEISSILQELKRVEKQLQVINAMID) form a coiled coil. Residues 1511–1540 (AILPSPPKQKSSPVNNHSSPSQTPALCPPE) form a disordered region. Polar residues predominate over residues 1518–1534 (KQKSSPVNNHSSPSQTP). Residues Ser-1521 and Ser-1522 each carry the phosphoserine modification.

It belongs to the CEP170 family. Interacts with CCDC68 and CCDC120; leading to recruitment to centrosomes. Interacts with PLK1. Interacts with NIN. Interacts with FHDC1. Interacts with CCDC61. Interacts with TBK1; efficient complex formation may be dependent on the presence of CCDC61. Phosphorylated; probably by PLK1.

It is found in the cytoplasm. It localises to the cytoskeleton. The protein localises to the microtubule organizing center. The protein resides in the centrosome. Its subcellular location is the centriole. It is found in the spindle. Plays a role in microtubule organization. Required for centriole subdistal appendage assembly. The protein is Centrosomal protein of 170 kDa (Cep170) of Mus musculus (Mouse).